Here is a 415-residue protein sequence, read N- to C-terminus: Trehalose synthase (415 aa).

It belongs to the glycosyltransferase group 1 family. Glycosyltransferase 4 subfamily. As to quaternary structure, homodimer. Requires Mg(2+) as cofactor.

It catalyses the reaction an NDP-alpha-D-glucose + D-glucose = alpha,alpha-trehalose + a ribonucleoside 5'-diphosphate + H(+). Functionally, synthesizes trehalose from ADP-, UDP- or GDP-glucose and glucose. The chain is Trehalose synthase from Pyrococcus horikoshii (strain ATCC 700860 / DSM 12428 / JCM 9974 / NBRC 100139 / OT-3).